The sequence spans 730 residues: Elongation factor 2 (730 aa).

The region spanning 19 to 228 (QRIRNIGIVA…TGVSFKDVYD (210 aa)) is the tr-type G domain. Residues 28 to 35 (AHIDHGKT), 94 to 98 (DTPGH), and 148 to 151 (NKVD) each bind GTP. Diphthamide is present on H596.

It belongs to the TRAFAC class translation factor GTPase superfamily. Classic translation factor GTPase family. EF-G/EF-2 subfamily.

Its subcellular location is the cytoplasm. Its function is as follows. Catalyzes the GTP-dependent ribosomal translocation step during translation elongation. During this step, the ribosome changes from the pre-translocational (PRE) to the post-translocational (POST) state as the newly formed A-site-bound peptidyl-tRNA and P-site-bound deacylated tRNA move to the P and E sites, respectively. Catalyzes the coordinated movement of the two tRNA molecules, the mRNA and conformational changes in the ribosome. The sequence is that of Elongation factor 2 from Methanosarcina acetivorans (strain ATCC 35395 / DSM 2834 / JCM 12185 / C2A).